Consider the following 428-residue polypeptide: Threonine synthase (428 aa).

Lys-107 is subject to N6-(pyridoxal phosphate)lysine.

The protein belongs to the threonine synthase family. Pyridoxal 5'-phosphate is required as a cofactor.

The enzyme catalyses O-phospho-L-homoserine + H2O = L-threonine + phosphate. It participates in amino-acid biosynthesis; L-threonine biosynthesis; L-threonine from L-aspartate: step 5/5. Its activity is regulated as follows. Is competitively inhibited by L-threo-3-hydroxyhomoserine phosphate. Functionally, catalyzes the gamma-elimination of phosphate from L-phosphohomoserine and the beta-addition of water to produce L-threonine. To a lesser extent, is able to slowly catalyze the deamination of L-threonine into alpha-ketobutyrate and that of L-serine and 3-chloroalanine into pyruvate. Is also able to rapidly convert vinylglycine to threonine, which proves that the pyridoxal p-quinonoid of vinylglycine is an intermediate in the TS reaction. The sequence is that of Threonine synthase (thrC) from Escherichia coli (strain K12).